The following is a 1364-amino-acid chain: Collagen alpha-2(I) chain (1364 aa).

The first 22 residues, 1 to 22, serve as a signal peptide directing secretion; that stretch reads MLSFVDTRTLLLLAVTSCLATC. Glutamine 23 is modified (pyrrolidone carboxylic acid). Positions 23-79 are cleaved as a propeptide — N-terminal propeptide; the sequence is QSLQEATARKGPSGDRGPRGERGPPGPPGRDGDDGIPGPPGPPGPPGPPGLGGNFAA. A disordered region spans residues 26–1128; it reads QEATARKGPS…QPRSPTSLRP (1103 aa). Over residues 34–44 the composition is skewed to basic and acidic residues; the sequence is PSGDRGPRGER. The span at 59–71 shows a compositional bias: pro residues; it reads PGPPGPPGPPGPP. Position 80 is a pyrrolidone carboxylic acid (glutamine 80). The residue at position 84 (lysine 84) is an Allysine. A compositionally biased stretch (low complexity) spans 93-130; it reads LMGPRGPPGASGAPGPQGFQGPPGEPGEPGQTGPAGAR. Residues proline 100, proline 106, proline 115, proline 118, proline 121, proline 133, proline 136, proline 145, proline 151, proline 166, proline 169, and proline 172 each carry the 4-hydroxyproline modification. Over residues 139–153 the composition is skewed to basic and acidic residues; sequence AGEDGHPGKPGRPGE. Residue lysine 175 is modified to 5-hydroxylysine; alternate. The O-linked (Gal...) hydroxylysine; alternate glycan is linked to lysine 175. 4-hydroxyproline is present on residues proline 190 and proline 193. At lysine 196 the chain carries 5-hydroxylysine. A 4-hydroxyproline mark is found at proline 199, proline 202, proline 208, proline 217, proline 226, proline 253, proline 256, and proline 259. Over residues 223–252 the composition is skewed to low complexity; it reads VGAPGPAGARGSDGSVGPVGPAGPIGSAGP. Lysine 262 carries the 5-hydroxylysine modification. 4-hydroxyproline occurs at positions 271, 286, 295, and 304. Residues 277–291 show a composition bias toward low complexity; sequence AGPRGEVGLPGLSGP. The segment covering 298-319 has biased composition (low complexity); sequence PGANGLPGAKGAAGLPGVAGAP. At lysine 307 the chain carries 5-hydroxylysine. Residues proline 313, proline 319, proline 322, proline 328, and proline 346 each carry the 4-hydroxyproline modification. Low complexity predominate over residues 328–343; that stretch reads PGPVGAAGATGARGLV. Position 352 is a 5-hydroxylysine (lysine 352). 4-hydroxyproline is present on residues proline 361, proline 367, proline 370, proline 391, proline 394, proline 400, proline 406, proline 439, and proline 442. Residues 396-406 show a composition bias toward low complexity; sequence LRGNPGSRGLP. Composition is skewed to low complexity over residues 468-487 and 511-535; these read LPGI…RGEP and AGLA…PGLQ. Residues 536 to 545 are compositionally biased toward gly residues; sequence GVQGGKGEQG. Low complexity-rich tracts occupy residues 592 to 609, 621 to 643, 666 to 688, and 715 to 735; these read PGES…SRGP, EPGV…PGER, SPGR…AGAN, and VGPA…QPGA. Basic and acidic residues predominate over residues 736-745; that stretch reads KGERGTKGPK. Low complexity predominate over residues 748 to 763; it reads NGPVGPTGPVGAAGPS. The span at 773–782 shows a compositional bias: gly residues; that stretch reads GSRGDGGPPG. Low complexity-rich tracts occupy residues 783-793, 861-874, 891-930, 948-961, and 978-999; these read ATGFPGAAGRT, PQGL…LGLP, EPGP…NPGN, YPGN…AGAP, and EPGP…PSGP. Residues 1003-1014 show a composition bias toward basic and acidic residues; sequence RGDKGEPGDKGP. Pro residues predominate over residues 1087-1101; it reads AGPPGPPGPPGPPGP. Positions 1118-1364 are cleaved as a propeptide — C-terminal propeptide; sequence DQPRSPTSLR…RLNIGPVCFK (247 aa). A Fibrillar collagen NC1 domain is found at 1131–1364; it reads YEVDATLKSL…RLNIGPVCFK (234 aa). Intrachain disulfides connect cysteine 1161-cysteine 1193, cysteine 1201-cysteine 1362, and cysteine 1270-cysteine 1315. Residues aspartate 1179, asparagine 1181, glutamine 1182, cysteine 1184, and aspartate 1187 each coordinate Ca(2+). N-linked (GlcNAc...) asparagine glycosylation is present at asparagine 1265.

It belongs to the fibrillar collagen family. In terms of assembly, trimers of one alpha 2(I) and two alpha 1(I) chains. Interacts (via C-terminus) with TMEM131 (via PapD-L domain); the interaction is direct and is involved in assembly and TRAPPIII ER-to-Golgi transport complex-dependent secretion of collagen. Post-translationally, prolines at the third position of the tripeptide repeating unit (G-X-Y) are hydroxylated in some or all of the chains. Forms the fibrils of tendon, ligaments and bones. In bones the fibrils are mineralized with calcium hydroxyapatite.

The protein localises to the secreted. The protein resides in the extracellular space. It is found in the extracellular matrix. Its function is as follows. Type I collagen is a member of group I collagen (fibrillar forming collagen). This Bos taurus (Bovine) protein is Collagen alpha-2(I) chain (COL1A2).